The primary structure comprises 590 residues: Aspartate--tRNA(Asp/Asn) ligase (590 aa).

Position 173 (Glu-173) interacts with L-aspartate. The aspartate stretch occupies residues 197–200 (QIFK). Arg-219 contacts L-aspartate. ATP-binding positions include 219–221 (RDE) and Gln-228. His-450 serves as a coordination point for L-aspartate. Glu-484 provides a ligand contact to ATP. Residue Arg-491 coordinates L-aspartate. An ATP-binding site is contributed by 536 to 539 (GLDR).

The protein belongs to the class-II aminoacyl-tRNA synthetase family. Type 1 subfamily. As to quaternary structure, homodimer.

The protein localises to the cytoplasm. The enzyme catalyses tRNA(Asx) + L-aspartate + ATP = L-aspartyl-tRNA(Asx) + AMP + diphosphate. In terms of biological role, aspartyl-tRNA synthetase with relaxed tRNA specificity since it is able to aspartylate not only its cognate tRNA(Asp) but also tRNA(Asn). Reaction proceeds in two steps: L-aspartate is first activated by ATP to form Asp-AMP and then transferred to the acceptor end of tRNA(Asp/Asn). The protein is Aspartate--tRNA(Asp/Asn) ligase of Coxiella burnetii (strain RSA 493 / Nine Mile phase I).